The chain runs to 163 residues: ATP synthase subunit b 1 (163 aa).

The chain crosses the membrane as a helical span at residues 5-25 (LDATFFAFVGLVLFLALVVYL).

Belongs to the ATPase B chain family. In terms of assembly, F-type ATPases have 2 components, F(1) - the catalytic core - and F(0) - the membrane proton channel. F(1) has five subunits: alpha(3), beta(3), gamma(1), delta(1), epsilon(1). F(0) has three main subunits: a(1), b(2) and c(10-14). The alpha and beta chains form an alternating ring which encloses part of the gamma chain. F(1) is attached to F(0) by a central stalk formed by the gamma and epsilon chains, while a peripheral stalk is formed by the delta and b chains.

The protein resides in the cell inner membrane. F(1)F(0) ATP synthase produces ATP from ADP in the presence of a proton or sodium gradient. F-type ATPases consist of two structural domains, F(1) containing the extramembraneous catalytic core and F(0) containing the membrane proton channel, linked together by a central stalk and a peripheral stalk. During catalysis, ATP synthesis in the catalytic domain of F(1) is coupled via a rotary mechanism of the central stalk subunits to proton translocation. In terms of biological role, component of the F(0) channel, it forms part of the peripheral stalk, linking F(1) to F(0). This chain is ATP synthase subunit b 1, found in Rhizobium etli (strain CIAT 652).